Reading from the N-terminus, the 92-residue chain is C-C motif chemokine 4 (92 aa).

A signal peptide spans 1-23 (MKLCVTVLSLLVLAAAFCSPALS). 2 cysteine pairs are disulfide-bonded: cysteine 34–cysteine 58 and cysteine 35–cysteine 74.

Belongs to the intercrine beta (chemokine CC) family. As to quaternary structure, homodimer. Interacts with CCR5. Detected in peripheral blood mononuclear cells and lymph nodes.

The protein localises to the secreted. Functionally, monokine with inflammatory and chemokinetic properties. The sequence is that of C-C motif chemokine 4 (CCL4) from Macaca mulatta (Rhesus macaque).